The chain runs to 227 residues: 7-cyano-7-deazaguanine synthase (227 aa).

Residue 11 to 21 (VSGGMDSAALL) participates in ATP binding. Positions 192, 200, 203, and 206 each coordinate Zn(2+).

The protein belongs to the QueC family. Zn(2+) serves as cofactor.

It catalyses the reaction 7-carboxy-7-deazaguanine + NH4(+) + ATP = 7-cyano-7-deazaguanine + ADP + phosphate + H2O + H(+). It functions in the pathway purine metabolism; 7-cyano-7-deazaguanine biosynthesis. Catalyzes the ATP-dependent conversion of 7-carboxy-7-deazaguanine (CDG) to 7-cyano-7-deazaguanine (preQ(0)). This chain is 7-cyano-7-deazaguanine synthase, found in Persephonella marina (strain DSM 14350 / EX-H1).